A 957-amino-acid chain; its full sequence is Glycine dehydrogenase (decarboxylating) (957 aa).

Lysine 708 is subject to N6-(pyridoxal phosphate)lysine.

Belongs to the GcvP family. In terms of assembly, the glycine cleavage system is composed of four proteins: P, T, L and H. Requires pyridoxal 5'-phosphate as cofactor.

The catalysed reaction is N(6)-[(R)-lipoyl]-L-lysyl-[glycine-cleavage complex H protein] + glycine + H(+) = N(6)-[(R)-S(8)-aminomethyldihydrolipoyl]-L-lysyl-[glycine-cleavage complex H protein] + CO2. In terms of biological role, the glycine cleavage system catalyzes the degradation of glycine. The P protein binds the alpha-amino group of glycine through its pyridoxal phosphate cofactor; CO(2) is released and the remaining methylamine moiety is then transferred to the lipoamide cofactor of the H protein. The polypeptide is Glycine dehydrogenase (decarboxylating) (Salmonella typhi).